The sequence spans 432 residues: Protein prenyltransferase alpha subunit repeat-containing protein 1-A (432 aa).

6 PFTA repeats span residues 86-119 (ELID…TLNP), 121-154 (KDLQ…VQEL), 179-212 (EEMH…GNLK), 218-251 (DELS…LSKT), 294-327 (EEMD…HQLL), and 395-432 (SFDS…LQGH).

It belongs to the protein prenyltransferase subunit alpha family.

The chain is Protein prenyltransferase alpha subunit repeat-containing protein 1-A (ptar1-a) from Xenopus laevis (African clawed frog).